Consider the following 492-residue polypeptide: Ketol-acid reductoisomerase (NADP(+)) (492 aa).

Residues 15-208 (AQLGKCRFMA…GGDRAGVLES (194 aa)) enclose the KARI N-terminal Rossmann domain. Residues 45 to 48 (CGAQ), arginine 68, arginine 76, serine 78, and 108 to 110 (DKQ) each bind NADP(+). Histidine 132 is a catalytic residue. Residue glycine 158 participates in NADP(+) binding. KARI C-terminal knotted domains lie at 209–344 (SFVA…KAPP) and 345–485 (FEGK…MTDM). Aspartate 217, glutamate 221, glutamate 389, and glutamate 393 together coordinate Mg(2+). Serine 414 provides a ligand contact to substrate.

This sequence belongs to the ketol-acid reductoisomerase family. Mg(2+) is required as a cofactor.

The catalysed reaction is (2R)-2,3-dihydroxy-3-methylbutanoate + NADP(+) = (2S)-2-acetolactate + NADPH + H(+). It carries out the reaction (2R,3R)-2,3-dihydroxy-3-methylpentanoate + NADP(+) = (S)-2-ethyl-2-hydroxy-3-oxobutanoate + NADPH + H(+). It participates in amino-acid biosynthesis; L-isoleucine biosynthesis; L-isoleucine from 2-oxobutanoate: step 2/4. Its pathway is amino-acid biosynthesis; L-valine biosynthesis; L-valine from pyruvate: step 2/4. Involved in the biosynthesis of branched-chain amino acids (BCAA). Catalyzes an alkyl-migration followed by a ketol-acid reduction of (S)-2-acetolactate (S2AL) to yield (R)-2,3-dihydroxy-isovalerate. In the isomerase reaction, S2AL is rearranged via a Mg-dependent methyl migration to produce 3-hydroxy-3-methyl-2-ketobutyrate (HMKB). In the reductase reaction, this 2-ketoacid undergoes a metal-dependent reduction by NADPH to yield (R)-2,3-dihydroxy-isovalerate. In Edwardsiella ictaluri (strain 93-146), this protein is Ketol-acid reductoisomerase (NADP(+)).